A 246-amino-acid polypeptide reads, in one-letter code: 5-oxoprolinase subunit A (246 aa).

This sequence belongs to the LamB/PxpA family. As to quaternary structure, forms a complex composed of PxpA, PxpB and PxpC.

It catalyses the reaction 5-oxo-L-proline + ATP + 2 H2O = L-glutamate + ADP + phosphate + H(+). Catalyzes the cleavage of 5-oxoproline to form L-glutamate coupled to the hydrolysis of ATP to ADP and inorganic phosphate. This chain is 5-oxoprolinase subunit A, found in Cupriavidus necator (strain ATCC 17699 / DSM 428 / KCTC 22496 / NCIMB 10442 / H16 / Stanier 337) (Ralstonia eutropha).